A 436-amino-acid polypeptide reads, in one-letter code: Ribosomal protein uS12 methylthiotransferase RimO (436 aa).

The MTTase N-terminal domain maps to 2 to 117 (KNVGIISLGC…IAEVIEKIEK (116 aa)). Residues Cys11, Cys47, Cys80, Cys154, Cys158, and Cys161 each contribute to the [4Fe-4S] cluster site. Residues 140 to 369 (TTPNYYAYLK…MEIQKEISYQ (230 aa)) enclose the Radical SAM core domain. The TRAM domain occupies 372 to 436 (LSKVGKQLEV…AYEYDLVGEY (65 aa)).

It belongs to the methylthiotransferase family. RimO subfamily. The cofactor is [4Fe-4S] cluster.

The protein resides in the cytoplasm. The catalysed reaction is L-aspartate(89)-[ribosomal protein uS12]-hydrogen + (sulfur carrier)-SH + AH2 + 2 S-adenosyl-L-methionine = 3-methylsulfanyl-L-aspartate(89)-[ribosomal protein uS12]-hydrogen + (sulfur carrier)-H + 5'-deoxyadenosine + L-methionine + A + S-adenosyl-L-homocysteine + 2 H(+). In terms of biological role, catalyzes the methylthiolation of an aspartic acid residue of ribosomal protein uS12. The protein is Ribosomal protein uS12 methylthiotransferase RimO of Thermoanaerobacter sp. (strain X514).